We begin with the raw amino-acid sequence, 420 residues long: 3-isopropylmalate dehydratase large subunit (420 aa).

[4Fe-4S] cluster contacts are provided by Cys-300, Cys-361, and Cys-364.

This sequence belongs to the aconitase/IPM isomerase family. LeuC type 2 subfamily. In terms of assembly, heterodimer of LeuC and LeuD. The cofactor is [4Fe-4S] cluster.

The catalysed reaction is (2R,3S)-3-isopropylmalate = (2S)-2-isopropylmalate. The protein operates within amino-acid biosynthesis; L-leucine biosynthesis; L-leucine from 3-methyl-2-oxobutanoate: step 2/4. In terms of biological role, catalyzes the isomerization between 2-isopropylmalate and 3-isopropylmalate, via the formation of 2-isopropylmaleate. This is 3-isopropylmalate dehydratase large subunit from Endomicrobium trichonymphae.